Here is a 141-residue protein sequence, read N- to C-terminus: VLSPADKTNIKAAWDKVGAHAGDYGAEALERMFLSFPTTKTYFPHFDLSHGSAQVKGHGKKVGDALGNAVAHMDDLPGALSALSDLHAYKLRVDPVNFKLLSHCLLVTLACHLPGEFTPAIHASLDKFLASVSTVLVSKYR.

A Globin domain is found at 1–141 (VLSPADKTNI…VSTVLVSKYR (141 aa)). Ser3 is subject to Phosphoserine. An N6-succinyllysine modification is found at Lys7. Position 8 is a phosphothreonine (Thr8). N6-succinyllysine is present on Lys11. N6-acetyllysine; alternate is present on Lys16. Lys16 bears the N6-succinyllysine; alternate mark. Tyr24 is modified (phosphotyrosine). Ser35 is subject to Phosphoserine. An N6-succinyllysine modification is found at Lys40. Ser49 carries the post-translational modification Phosphoserine. Residue His58 coordinates O2. Heme b is bound at residue His87. Ser102 is subject to Phosphoserine. At Thr108 the chain carries Phosphothreonine. Ser124 and Ser131 each carry phosphoserine. A Phosphothreonine modification is found at Thr134. Ser138 bears the Phosphoserine mark.

Belongs to the globin family. Heterotetramer of two alpha chains and two beta chains. Red blood cells.

Its function is as follows. Involved in oxygen transport from the lung to the various peripheral tissues. In terms of biological role, hemopressin acts as an antagonist peptide of the cannabinoid receptor CNR1. Hemopressin-binding efficiently blocks cannabinoid receptor CNR1 and subsequent signaling. The polypeptide is Hemoglobin subunit alpha (HBA) (Myotis velifer (Mouse-eared bat)).